A 324-amino-acid chain; its full sequence is tRNA dimethylallyltransferase (324 aa).

Position 18 to 25 (18 to 25 (GPTAVGKT)) interacts with ATP. 20–25 (TAVGKT) is a binding site for substrate. Positions 43 to 46 (DSRQ) are interaction with substrate tRNA.

This sequence belongs to the IPP transferase family. Monomer. It depends on Mg(2+) as a cofactor.

It carries out the reaction adenosine(37) in tRNA + dimethylallyl diphosphate = N(6)-dimethylallyladenosine(37) in tRNA + diphosphate. Functionally, catalyzes the transfer of a dimethylallyl group onto the adenine at position 37 in tRNAs that read codons beginning with uridine, leading to the formation of N6-(dimethylallyl)adenosine (i(6)A). The chain is tRNA dimethylallyltransferase from Salinibacter ruber (strain DSM 13855 / M31).